An 89-amino-acid chain; its full sequence is Acyl carrier protein MbtL (89 aa).

The Carrier domain maps to 8–83 (NHVSAELLGI…DLQAAIAAEP (76 aa)). Ser43 bears the O-(pantetheine 4'-phosphoryl)serine mark.

In terms of processing, 4'-phosphopantetheine is transferred from CoA to a specific serine of apo-ACP, leading to the activated holo-ACP form.

It is found in the cytoplasm. It participates in siderophore biosynthesis; mycobactin biosynthesis. Functionally, acyl carrier protein involved in the formation of acyl-S-ACP intermediates within the mycobactin biosynthesis process. This chain is Acyl carrier protein MbtL (mbtL), found in Mycolicibacterium paratuberculosis (strain ATCC BAA-968 / K-10) (Mycobacterium paratuberculosis).